We begin with the raw amino-acid sequence, 373 residues long: Beta sliding clamp homolog GriR (373 aa).

The protein belongs to the beta sliding clamp family. As to quaternary structure, forms a ring-shaped head-to-tail homodimer around DNA which binds and tethers DNA polymerases and other proteins to the DNA. The DNA replisome complex has a single clamp-loading complex (3 tau and 1 each of delta, delta', psi and chi subunits) which binds 3 Pol III cores (1 core on the leading strand and 2 on the lagging strand) each with a beta sliding clamp dimer. Additional proteins in the replisome are other copies of gamma, psi and chi, Ssb, DNA helicase and RNA primase.

The protein localises to the cytoplasm. A homolog of the beta sliding clamp protein encoded within the biosynthetic cluster for griselimycin synthesis. Upon expression in S.coelicolor A3(2), which is susceptible to this antibiotic, confers resistance to griselimycin. The beta sliding clamp confers DNA tethering and processivity to DNA polymerases and other proteins. Acts as a clamp, forming a ring around DNA (a reaction catalyzed by the clamp-loading complex) which diffuses in an ATP-independent manner freely and bidirectionally along dsDNA. Initially characterized for its ability to contact the catalytic subunit of DNA polymerase III (Pol III), a complex, multichain enzyme responsible for most of the replicative synthesis in bacteria; Pol III exhibits 3'-5' exonuclease proofreading activity. The beta chain is required for initiation of replication as well as for processivity of DNA replication. This chain is Beta sliding clamp homolog GriR, found in Streptomyces muensis.